Consider the following 449-residue polypeptide: Maltose-6'-phosphate glucosidase (449 aa).

6–72 (FSIVIAGGGS…PDIEFAATTD (67 aa)) serves as a coordination point for NAD(+). Substrate contacts are provided by Arg95 and Asn149. Position 171 (Cys171) interacts with Mn(2+). The active-site Proton donor is Asp172. A Mn(2+)-binding site is contributed by His202. The active-site Proton acceptor is Tyr265. Arg285 contacts substrate.

This sequence belongs to the glycosyl hydrolase 4 family. Homotetramer. Mn(2+) serves as cofactor. Fe(2+) is required as a cofactor. Requires Co(2+) as cofactor. The cofactor is Ni(2+). It depends on NAD(+) as a cofactor.

The enzyme catalyses alpha-maltose 6'-phosphate + H2O = D-glucose 6-phosphate + D-glucose. With respect to regulation, cellobiose-6'-phosphate and 6-phospho-beta-D-glucopyranoside are not substrates but competitive inhibitors of GlvA. In terms of biological role, hydrolyzes maltose-6'-phosphate and trehalose-6'-phosphate. Is involved in the catabolism of alpha-glycosides accumulated via a phosphoenolpyruvate-dependent maltose phosphotransferase system (PEP-PTS). Is also able to significantly catalyze the hydrolysis of both 6-phospho-alpha- and 6-phospho-beta-glucosides containing activated leaving groups such as p-nitrophenol and does so with retention and inversion, respectively, of the substrate anomeric configuration. This chain is Maltose-6'-phosphate glucosidase (glvA), found in Bacillus subtilis (strain 168).